The following is a 370-amino-acid chain: Gibberellin 3-beta-dioxygenase 2-1 (370 aa).

A Fe2OG dioxygenase domain is found at 205–306 (MTATMHLNWY…RISLGYFLGP (102 aa)). Histidine 229, aspartate 231, and histidine 287 together coordinate Fe cation. Arginine 297 is an active-site residue.

This sequence belongs to the iron/ascorbate-dependent oxidoreductase family. GA3OX subfamily. It depends on L-ascorbate as a cofactor. Fe cation is required as a cofactor. Expressed in internodes, nodes and the ear of the elongating stem.

The enzyme catalyses gibberellin A20 + 2-oxoglutarate + O2 = gibberellin A1 + succinate + CO2. Its function is as follows. Converts the inactive gibberellin precursors GA9 and GA20 in the bioactives gibberellins GA4 and GA1. Also accepts GA15, GA44, the 2,3-unsaturated GA5 and 2,3-dihydroGA9 as substrate. No activity with GA12, GA53, GA24, GA19 and GA25. Also possesses 2-beta-hydroxylase, 2,3-desaturase, 2,3-epoxidase and 13-hydroxylase activities. The sequence is that of Gibberellin 3-beta-dioxygenase 2-1 (GA3ox2-1) from Triticum aestivum (Wheat).